We begin with the raw amino-acid sequence, 57 residues long: Somatostatin-2 (57 aa).

Positions 1–26 (GRSHMVLNSALEGARGGPGGEEIPER) are disordered.

It belongs to the somatostatin family.

The protein resides in the secreted. Somatostatin inhibits the release of somatotropin. The polypeptide is Somatostatin-2 (sst2) (Piaractus mesopotamicus (Small-scaled pacu)).